Consider the following 358-residue polypeptide: tRNA (guanine(26)-N(2))-dimethyltransferase (358 aa).

In terms of domain architecture, Trm1 methyltransferase spans 5-354 (VIRREGKAVF…ATYGEVERVL (350 aa)). S-adenosyl-L-methionine is bound by residues Arg39, Arg69, Asp87, Asp113, and Ala114.

Belongs to the class I-like SAM-binding methyltransferase superfamily. Trm1 family.

It carries out the reaction guanosine(26) in tRNA + 2 S-adenosyl-L-methionine = N(2)-dimethylguanosine(26) in tRNA + 2 S-adenosyl-L-homocysteine + 2 H(+). In terms of biological role, dimethylates a single guanine residue at position 26 of a number of tRNAs using S-adenosyl-L-methionine as donor of the methyl groups. In Pyrobaculum calidifontis (strain DSM 21063 / JCM 11548 / VA1), this protein is tRNA (guanine(26)-N(2))-dimethyltransferase.